A 582-amino-acid polypeptide reads, in one-letter code: Semenogelin-2 (582 aa).

Residues 1–23 form the signal peptide; the sequence is MKSIILFVLSLLLILEKQAAVMG. The tract at residues 24-59 is disordered; it reads QKGGSKGQLPSGSSQFPHGQKGQHYFGQKDQQHTKS. The segment covering 31-40 has biased composition (polar residues); the sequence is QLPSGSSQFP. Tandem repeats lie at residues 70–129, 141–200, and 201–260. Residues 70 to 559 form a repeat-rich region region; it reads HVDINDHDWT…SSESHNIVIT (490 aa). 4 disordered regions span residues 132-160, 173-194, 228-248, and 269-582; these read GGQA…SQCS, KEQA…QSSY, EEHS…RLQH, and QTKN…PIST. Composition is skewed to polar residues over residues 137-160 and 174-194; these read HGTQ…SQCS and EQAS…QSSY. The interval 261–500 is 4 X 60 AA tandem repeats, type I; sequence LVYNKNQHQT…QSSISFQIEK (240 aa). N-linked (GlcNAc...) asparagine glycosylation occurs at Asn-272. Positions 292-310 are enriched in basic and acidic residues; that stretch reads RTEERQLHHGEKSVQKDVS. Positions 325-334 are enriched in polar residues; it reads KSQNQVTIHS. Residues 335–345 show a composition bias toward basic and acidic residues; sequence QDQEHGHKENK. Positions 372-397 are enriched in polar residues; sequence GSISIQTEEQIHGKSQNQVRIPSQAQ. A compositionally biased stretch (basic and acidic residues) spans 413-426; it reads TEERRLNSGEKDVQ. Over residues 445-455 the composition is skewed to polar residues; sequence KSQNQVTIPSQ. The span at 456-465 shows a compositional bias: basic and acidic residues; it reads DQEHGHKENK. 2 stretches are compositionally biased toward polar residues: residues 482–496 and 506–532; these read GKST…SISF and SQIQ…QSAD. Residues 501–559 form a 3-2 repeat; sequence LVEGKSQIQTPNPNQDQWSGQNAKGKSGQSADSKQDLLSHEQKGRYKQESSESHNIVIT. Basic and acidic residues-rich tracts occupy residues 533–552 and 559–582; these read SKQD…ESSE and TEHE…PIST.

The protein belongs to the semenogelin family. As to quaternary structure, interacts with SERPINA5. Semenogelin-2 is thought to form both the 71 kDa polypeptide and, in its glycosylated form, the 76 kDa polypeptide. In terms of tissue distribution, seminal vesicles, and to a much lesser extent, epididymis.

It localises to the secreted. Functionally, participates in the formation of a gel matrix (sperm coagulum) entrapping the accessory gland secretions and ejaculated spermatozoa. This is Semenogelin-2 (SEMG2) from Homo sapiens (Human).